We begin with the raw amino-acid sequence, 513 residues long: Solute carrier family 2, facilitated glucose transporter member 10 (513 aa).

Residues 1–6 are Cytoplasmic-facing; that stretch reads MGCSVL. Residues 7 to 27 traverse the membrane as a helical segment; that stretch reads LLTITVSTLGGLVFGYELGII. The Extracellular segment spans residues 28–46; sequence SGALPQLQTHFSLGCVQQE. Residues 47–67 form a helical membrane-spanning segment; the sequence is AVVSALLIGSLFASIIGGWLI. The Cytoplasmic segment spans residues 68-80; it reads DRHGRRTSILLSN. A helical membrane pass occupies residues 81-101; it reads LLILAGSVILTTGTSFFALVI. Residues 102-104 lie on the Extracellular side of the membrane; the sequence is GRA. Residues 105-125 form a helical membrane-spanning segment; sequence VIGFAMTVSSMSCCIFVSEMV. Topologically, residues 126-130 are cytoplasmic; sequence TPERR. The helical transmembrane segment at 131–151 threads the bilayer; that stretch reads GLMVTLYEVGITVGILIAYAV. Over 152–164 the chain is Extracellular; the sequence is NYIFNNVPLTGWR. The helical transmembrane segment at 165–185 threads the bilayer; the sequence is YMFGFAIIPSLIQLASIVLLP. Residues 186–236 lie on the Cytoplasmic side of the membrane; it reads KQAEVFVIHDDDSRQADRLTEETETSNQHQQSEKYGVSDLFKSKDNMRRRT. Residues 237–257 form a helical membrane-spanning segment; sequence VIGVGLVLSQQFTGQPNVLFY. Residue 246 to 247 participates in D-glucose binding; that stretch reads QQ. At 258–272 the chain is on the extracellular side; the sequence is ASTILFSVGFQSNAS. Asn-270 is a glycosylation site (N-linked (GlcNAc...) asparagine). Residues 273-293 traverse the membrane as a helical segment; the sequence is AILASVGFGIVKVIATLLAML. Residues 294–301 lie on the Cytoplasmic side of the membrane; that stretch reads CSDRAGRR. Residues 302-322 traverse the membrane as a helical segment; sequence SLLIGGCSMLAVGLILTGFLC. Residues 323-376 are Extracellular-facing; that stretch reads RQSVIDTTKRCTSVGPHSNLTLSAEHDEGVGFSSQTLDVHEHLRSFSQSEDIYK. The N-linked (GlcNAc...) asparagine glycan is linked to Asn-341. The helical transmembrane segment at 377-397 threads the bilayer; that stretch reads WIIFTCLMAVVSAFSVSFGPM. The Cytoplasmic portion of the chain corresponds to 398 to 422; it reads TWVVLSEIFPKDIRGRAFSFINCFN. Trp-399 is a binding site for D-glucose. 2 consecutive transmembrane segments (helical) span residues 423 to 443 and 444 to 464; these read VGAN…IGLS and GVFL…YLVL. The Cytoplasmic segment spans residues 465–513; that stretch reads PETKGKSLQDIDRELSQTRMIHRQELCSIFQRRRFSPGYQRVQLTSTAT.

Belongs to the major facilitator superfamily. Sugar transporter (TC 2.A.1.1) family. Glucose transporter subfamily.

The protein localises to the endomembrane system. It is found in the cytoplasm. Its subcellular location is the perinuclear region. It catalyses the reaction D-glucose(out) = D-glucose(in). In terms of biological role, facilitative glucose transporter required for the development of the cardiovascular system. This chain is Solute carrier family 2, facilitated glucose transporter member 10, found in Danio rerio (Zebrafish).